A 397-amino-acid polypeptide reads, in one-letter code: Iron-sulfur cluster assembly SufBD family protein Mb1497 (397 aa).

This sequence belongs to the iron-sulfur cluster assembly SufBD family.

This is Iron-sulfur cluster assembly SufBD family protein Mb1497 from Mycobacterium bovis (strain ATCC BAA-935 / AF2122/97).